We begin with the raw amino-acid sequence, 709 residues long: Protein IMPAIRED IN BABA-INDUCED STERILITY 1 (709 aa).

A lipid anchor (N-myristoyl glycine) is attached at Gly2. The tract at residues 53-80 (SGKKSSSKKSGSELGSDFGELSESGRAS) is disordered. The Protein kinase domain occupies 131-418 (FEKLEKIGQG…ASTALVSQYF (288 aa)). ATP is bound by residues 137–145 (IGQGTYSSV) and Lys160. The active-site Proton acceptor is the Asp255. Disordered stretches follow at residues 434 to 536 (SPSK…PFSG) and 566 to 609 (SRGH…QDRE). A compositionally biased stretch (basic and acidic residues) spans 437 to 449 (KEIDAKHREDTTR). Residues 484–494 (HSQKFQKRNGH) show a composition bias toward basic residues. Positions 495-505 (SVHNSIDSDST) are enriched in polar residues. Basic and acidic residues-rich tracts occupy residues 509-523 (KMQKPSNHEKDEASH) and 586-609 (VDSKNNEKEKEEKHGERTDSQDRE).

Belongs to the protein kinase superfamily. Ser/Thr protein kinase family.

Required for beta-aminobutyric acid (BABA)-induced resistance (BABA-IR) against bacteria (e.g. P.syringae) and oomycetes (e.g. H.parasitica) via priming for salicylate (SA)-dependent defense responses such as pathogenesis-related PR-1 gene expression and trailing necrosis. Involved in BABA-mediated sterility. Necessary for the inheritance of BABA-priming to next generation, especially for the primed to be primed phenotype which consists in an enhanced second BABA-priming in transgenerationally primed plants. This is Protein IMPAIRED IN BABA-INDUCED STERILITY 1 from Arabidopsis thaliana (Mouse-ear cress).